The primary structure comprises 257 residues: NAD-capped RNA hydrolase NudC (257 aa).

Arg69 provides a ligand contact to substrate. Positions 98 and 101 each coordinate Zn(2+). Residue Glu111 coordinates substrate. Positions 116 and 119 each coordinate Zn(2+). Residue Tyr124 coordinates substrate. Positions 125-248 (PQIAPCIIVA…TVARRLIEDT (124 aa)) constitute a Nudix hydrolase domain. A divalent metal cation contacts are provided by Ala158, Glu174, and Glu178. Positions 159-180 (GFVEVGETLEQAAAREIFEESR) match the Nudix box motif. 192 to 199 (QPWPFPHS) contacts substrate. Glu219 contributes to the a divalent metal cation binding site. A substrate-binding site is contributed by Ala241.

It belongs to the Nudix hydrolase family. NudC subfamily. In terms of assembly, homodimer. It depends on Mg(2+) as a cofactor. The cofactor is Mn(2+). Zn(2+) serves as cofactor.

The catalysed reaction is a 5'-end NAD(+)-phospho-ribonucleoside in mRNA + H2O = a 5'-end phospho-adenosine-phospho-ribonucleoside in mRNA + beta-nicotinamide D-ribonucleotide + 2 H(+). The enzyme catalyses NAD(+) + H2O = beta-nicotinamide D-ribonucleotide + AMP + 2 H(+). It carries out the reaction NADH + H2O = reduced beta-nicotinamide D-ribonucleotide + AMP + 2 H(+). In terms of biological role, mRNA decapping enzyme that specifically removes the nicotinamide adenine dinucleotide (NAD) cap from a subset of mRNAs by hydrolyzing the diphosphate linkage to produce nicotinamide mononucleotide (NMN) and 5' monophosphate mRNA. The NAD-cap is present at the 5'-end of some mRNAs and stabilizes RNA against 5'-processing. Has preference for mRNAs with a 5'-end purine. Catalyzes the hydrolysis of a broad range of dinucleotide pyrophosphates. This Edwardsiella ictaluri (strain 93-146) protein is NAD-capped RNA hydrolase NudC.